The sequence spans 477 residues: MNSVIHYSTSVAVRKASRFLFTSRKFCNGSIGGDVTDNGTEEPLKITWESSEMDCEFDQEENGEKISVRKRFMESTKLSASRVLDTLQQDCPGFNTKSALDELNVSISGLLVREVLVGILRTLSFDNKTRCAKLAYKFFVWCGGQENFRHTANCYHLLMKIFAECGEYKAMCRLIDEMIKDGYPTTACTFNLLICTCGEAGLARDVVEQFIKSKTFNYRPYKHSYNAILHSLLGVKQYKLIDWVYEQMLEDGFTPDVLTYNIVMFANFRLGKTDRLYRLLDEMVKDGFSPDLYTYNILLHHLATGNKPLAALNLLNHMREVGVEPGVIHFTTLIDGLSRAGKLEACKYFMDETVKVGCTPDVVCYTVMITGYISGGELEKAEEMFKEMTEKGQLPNVFTYNSMIRGFCMAGKFKEACALLKEMESRGCNPNFVVYSTLVNNLKNAGKVLEAHEVVKDMVEKGHYVHLISKLKKYRRS.

PPR repeat units follow at residues 151-185, 186-220, 221-255, 256-290, 291-325, 326-360, 361-395, 396-430, and 431-465; these read TANCYHLLMKIFAECGEYKAMCRLIDEMIKDGYPT, TACTFNLLICTCGEAGLARDVVEQFIKSKTFNYRP, YKHSYNAILHSLLGVKQYKLIDWVYEQMLEDGFTP, DVLTYNIVMFANFRLGKTDRLYRLLDEMVKDGFSP, DLYTYNILLHHLATGNKPLAALNLLNHMREVGVEP, GVIHFTTLIDGLSRAGKLEACKYFMDETVKVGCTP, DVVCYTVMITGYISGGELEKAEEMFKEMTEKGQLP, NVFTYNSMIRGFCMAGKFKEACALLKEMESRGCNP, and NFVVYSTLVNNLKNAGKVLEAHEVVKDMVEKGHYV.

This sequence belongs to the PPR family. P subfamily.

In Arabidopsis thaliana (Mouse-ear cress), this protein is Pentatricopeptide repeat-containing protein At1g55630.